The primary structure comprises 360 residues: DNA replication and repair protein RecF (360 aa).

Position 30–37 (30–37 (GHNGSGKT)) interacts with ATP.

The protein belongs to the RecF family.

It is found in the cytoplasm. Its function is as follows. The RecF protein is involved in DNA metabolism; it is required for DNA replication and normal SOS inducibility. RecF binds preferentially to single-stranded, linear DNA. It also seems to bind ATP. This chain is DNA replication and repair protein RecF, found in Actinobacillus pleuropneumoniae serotype 3 (strain JL03).